Here is a 1372-residue protein sequence, read N- to C-terminus: DNA-directed RNA polymerase subunit beta' (1372 aa).

Cys-69, Cys-71, Cys-84, and Cys-87 together coordinate Zn(2+). Residues Asp-460, Asp-462, and Asp-464 each contribute to the Mg(2+) site. Zn(2+)-binding residues include Cys-808, Cys-882, Cys-889, and Cys-892.

Belongs to the RNA polymerase beta' chain family. The RNAP catalytic core consists of 2 alpha, 1 beta, 1 beta' and 1 omega subunit. When a sigma factor is associated with the core the holoenzyme is formed, which can initiate transcription. It depends on Mg(2+) as a cofactor. Requires Zn(2+) as cofactor.

The enzyme catalyses RNA(n) + a ribonucleoside 5'-triphosphate = RNA(n+1) + diphosphate. Its function is as follows. DNA-dependent RNA polymerase catalyzes the transcription of DNA into RNA using the four ribonucleoside triphosphates as substrates. In Rickettsia felis (strain ATCC VR-1525 / URRWXCal2) (Rickettsia azadi), this protein is DNA-directed RNA polymerase subunit beta'.